The chain runs to 1089 residues: WD repeat-containing protein on Y chromosome (1089 aa).

WD repeat units follow at residues 155-199 (EEVA…IRTA), 207-249 (PHAV…RGPF), 329-368 (RIPL…EPSA), 372-411 (GHNG…LLQT), 462-501 (THAA…RKII), 514-553 (TIDI…VIRN), and 601-641 (FHTD…RRYS). Residues 661–684 (KRSKRWASRAPHSGSHMMSHTGSH) form a disordered region. Residues 672–684 (HSGSHMMSHTGSH) are compositionally biased toward low complexity. WD repeat units lie at residues 767–806 (KTGD…IPEA) and 850–889 (GHLK…LGTL). Residues 1049–1089 (LNIKLPSRRRSDRTNDPRNMRTAKTRGDMGLGHRSSHTSQN) form a disordered region.

This Drosophila willistoni (Fruit fly) protein is WD repeat-containing protein on Y chromosome.